The chain runs to 267 residues: Kallikrein-14 (267 aa).

The signal sequence occupies residues 1–34; that stretch reads MSLRVLGSGTWPSAPKMFLLLTALQVLAIAMTQS. A propeptide spans 35–40 (activation peptide); that stretch reads QEDENK. Residues 41–265 form the Peptidase S1 domain; the sequence is IIGGHTCTRS…YRSWIEETMR (225 aa). Disulfide bonds link C47-C180, C68-C84, C159-C226, C191-C205, and C216-C241. Catalysis depends on charge relay system residues H83 and D127. S220 (charge relay system) is an active-site residue.

This sequence belongs to the peptidase S1 family. Kallikrein subfamily. Post-translationally, proteolytic cleavage of the activation peptide produces the active enzyme. Highly expressed in CNS, bone marrow and fetal liver. Also expressed in breast, thyroid, kidney, colon, pancreas, spleen, prostate, uterus, small intestine, placenta and skeletal muscle. Among 40 tissues tested, the highest expression is detected in skin followed by breast and prostate (at protein level). Expressed in stratum corneum by sweat ducts and sweat glands and detected in sweat (at protein level).

It is found in the secreted. It localises to the extracellular space. Inhibited by SERPINA1, SERPINC1, SERPINE1, SERPINF2, aprotinin, soybean, trypsin inhibitor and leupeptin. Inhibited by serine protease inhibitor SPINK5. Has an autoproteolytic activity which may have a regulatory effect. Activated by citrate and inhibited by zinc and to a lower extent by manganese. Functionally, serine-type endopeptidase with a dual trypsin-like and chymotrypsin-like substrate specificity. May activate/inactivate the proteinase-activated receptors F2R, F2RL1 and F2RL3 and other kallikreins including KLK1, KLK3, KLK5 and KLK11. May function in seminal clot liquefaction through direct cleavage of the semenogelin SEMG1 and SEMG2 and activation of KLK3. May function through desmoglein DSG1 cleavage in epidermal desquamation a process by which the most superficial corneocytes are shed from the skin surface. May be involved in several aspects of tumor progression including growth, invasion and angiogenesis. This chain is Kallikrein-14 (KLK14), found in Homo sapiens (Human).